The primary structure comprises 317 residues: RHOMBOID-like protein 2 (317 aa).

Helical transmembrane passes span 33–53 (SWLI…VMFV), 118–138 (WLHA…FIGI), 149–169 (VGLI…LFLQ), 172–192 (ISVG…SELL), 202–222 (AAAL…GMLP), 224–244 (VDNF…FVLL), and 272–292 (LFVV…VMLF). Serine 177 serves as the catalytic Nucleophile. Histidine 229 serves as the catalytic Charge relay system.

This sequence belongs to the peptidase S54 family. In terms of tissue distribution, expressed in roots, seedlings, leaves, stems and flowers.

It is found in the golgi apparatus membrane. It catalyses the reaction Cleaves type-1 transmembrane domains using a catalytic dyad composed of serine and histidine that are contributed by different transmembrane domains.. Functionally, rhomboid-type serine protease that catalyzes intramembrane proteolysis. Can cleave the Drosophila proteins Spitz and Keren. May function in pollen elongation. The polypeptide is RHOMBOID-like protein 2 (Arabidopsis thaliana (Mouse-ear cress)).